Here is a 113-residue protein sequence, read N- to C-terminus: Photosystem II reaction center Psb28 protein (113 aa).

Belongs to the Psb28 family. Part of the photosystem II complex.

The protein resides in the cellular thylakoid membrane. The polypeptide is Photosystem II reaction center Psb28 protein (Trichodesmium erythraeum (strain IMS101)).